We begin with the raw amino-acid sequence, 75 residues long: Acyl carrier protein (75 aa).

The 75-residue stretch at 1-75 folds into the Carrier domain; that stretch reads MALFDDVKEV…GDAIKFIENV (75 aa). S36 is modified (O-(pantetheine 4'-phosphoryl)serine).

It belongs to the acyl carrier protein (ACP) family. 4'-phosphopantetheine is transferred from CoA to a specific serine of apo-ACP by AcpS. This modification is essential for activity because fatty acids are bound in thioester linkage to the sulfhydryl of the prosthetic group.

The protein resides in the cytoplasm. The protein operates within lipid metabolism; fatty acid biosynthesis. Its function is as follows. Carrier of the growing fatty acid chain in fatty acid biosynthesis. This Sulfurovum sp. (strain NBC37-1) protein is Acyl carrier protein.